Consider the following 391-residue polypeptide: Argininosuccinate synthase (391 aa).

Position 6–14 (6–14 (AYSGGLDTT)) interacts with ATP. Tyr-84 is a binding site for L-citrulline. Gly-114 is a binding site for ATP. L-aspartate contacts are provided by Thr-116, Asn-120, and Asp-121. Asn-120 contacts L-citrulline. L-citrulline contacts are provided by Arg-124, Ser-171, Ser-180, Glu-253, and Tyr-265.

Belongs to the argininosuccinate synthase family. Type 1 subfamily. As to quaternary structure, homotetramer.

Its subcellular location is the cytoplasm. The catalysed reaction is L-citrulline + L-aspartate + ATP = 2-(N(omega)-L-arginino)succinate + AMP + diphosphate + H(+). It functions in the pathway amino-acid biosynthesis; L-arginine biosynthesis; L-arginine from L-ornithine and carbamoyl phosphate: step 2/3. This chain is Argininosuccinate synthase, found in Sulfolobus acidocaldarius (strain ATCC 33909 / DSM 639 / JCM 8929 / NBRC 15157 / NCIMB 11770).